The sequence spans 311 residues: ADP-L-glycero-D-manno-heptose-6-epimerase (311 aa).

NADP(+) is bound by residues 10–11, 31–32, Lys38, Lys53, 75–79, and Asn92; these read FI, DD, and EGACS. Residue Tyr139 is the Proton acceptor of the active site. Lys143 is an NADP(+) binding site. Asn174 serves as a coordination point for substrate. Val175 and Lys183 together coordinate NADP(+). Lys183 (proton acceptor) is an active-site residue. Residues Ser185, His192, 206–209, Arg212, and Tyr275 contribute to the substrate site; that span reads FEGE.

Belongs to the NAD(P)-dependent epimerase/dehydratase family. HldD subfamily. Homopentamer. The cofactor is NADP(+).

It carries out the reaction ADP-D-glycero-beta-D-manno-heptose = ADP-L-glycero-beta-D-manno-heptose. It functions in the pathway nucleotide-sugar biosynthesis; ADP-L-glycero-beta-D-manno-heptose biosynthesis; ADP-L-glycero-beta-D-manno-heptose from D-glycero-beta-D-manno-heptose 7-phosphate: step 4/4. Its function is as follows. Catalyzes the interconversion between ADP-D-glycero-beta-D-manno-heptose and ADP-L-glycero-beta-D-manno-heptose via an epimerization at carbon 6 of the heptose. The sequence is that of ADP-L-glycero-D-manno-heptose-6-epimerase from Psychromonas ingrahamii (strain DSM 17664 / CCUG 51855 / 37).